The primary structure comprises 279 residues: MREFEAHGATASPGVVTNFLGVRIPSDIMPSILKSLEGQKEGFPIPGNWHADIAEWAAALLSVREAKTSYRILEVGCGWGCWLSNMGVAAKARGLKIDLIGVEGDQQNIEHAKHTLALNGIEAHEFQLTNGVASARNGVALFPILDGPGEVWGAEPIFHPDAETISKARAAGSHTELKCYTLDDLSHGKPIDLLHVDIQGSELDFVKGNFDEISTLVKRILIGTHSRYLEGSLQKFLLDQGWALEMDRPAICTNVAGKPQIAVDGVLLFRSPTMPHPVF.

This is Putative methyltransferase Jann_4284 from Jannaschia sp. (strain CCS1).